Reading from the N-terminus, the 537-residue chain is Probable feruloyl esterase ARB_07085 (537 aa).

An N-terminal signal peptide occupies residues 1–22 (MVTLPLLLSILPLAAVFSSAAS). 3 N-linked (GlcNAc...) asparagine glycosylation sites follow: N67, N76, and N189. 3 disulfide bridges follow: C196/C459, C263/C280, and C508/C529. The Acyl-ester intermediate role is filled by S197. The Ca(2+) site is built by D264, D267, V269, D271, and V273. Residue N339 is glycosylated (N-linked (GlcNAc...) asparagine). Residues D419 and H458 each act as charge relay system in the active site.

It belongs to the tannase family.

It localises to the secreted. The enzyme catalyses feruloyl-polysaccharide + H2O = ferulate + polysaccharide.. Hydrolyzes the feruloyl-arabinose ester bond in arabinoxylans as well as the feruloyl-galactose and feruloyl-arabinose ester bonds. The protein is Probable feruloyl esterase ARB_07085 of Arthroderma benhamiae (strain ATCC MYA-4681 / CBS 112371) (Trichophyton mentagrophytes).